A 437-amino-acid polypeptide reads, in one-letter code: RNA-binding motif, single-stranded-interacting protein 3 (437 aa).

Positions 28–57 (YAPAPHPMAPPSPSTNSSSNNSSNNSSGEQ) are disordered. Residues 31-40 (APHPMAPPSP) show a composition bias toward pro residues. Residues 41-54 (STNSSSNNSSNNSS) show a composition bias toward low complexity. RRM domains are found at residues 61–134 (TNLY…MAKQ) and 140–225 (TNLY…FADG). The span at 399–422 (TSPQTVAPSSQDTSGQQQQIAVDT) shows a compositional bias: polar residues. The segment at 399 to 437 (TSPQTVAPSSQDTSGQQQQIAVDTSNEHAPAYSYQQSKP) is disordered.

As to expression, expressed in fetal brain, fetal lung, fetal liver, heart, brain, placenta, lung, liver, muscle, kidney and pancreas.

The protein localises to the cytoplasm. In terms of biological role, binds poly(A) and poly(U) oligoribonucleotides. This is RNA-binding motif, single-stranded-interacting protein 3 (RBMS3) from Homo sapiens (Human).